Reading from the N-terminus, the 319-residue chain is HPr kinase/phosphorylase (319 aa).

Active-site residues include H144 and K165. 159-166 (GKSGIGKS) provides a ligand contact to ATP. Residue S166 participates in Mg(2+) binding. The Proton acceptor; for phosphorylation activity. Proton donor; for dephosphorylation activity role is filled by D183. An important for the catalytic mechanism of both phosphorylation and dephosphorylation region spans residues 207 to 216 (MEIRGLGVIN). E208 lines the Mg(2+) pocket. R249 is a catalytic residue. Residues 270 to 275 (PVRPGR) form an important for the catalytic mechanism of dephosphorylation region.

It belongs to the HPrK/P family. As to quaternary structure, homohexamer. The cofactor is Mg(2+).

The catalysed reaction is [HPr protein]-L-serine + ATP = [HPr protein]-O-phospho-L-serine + ADP + H(+). It catalyses the reaction [HPr protein]-O-phospho-L-serine + phosphate + H(+) = [HPr protein]-L-serine + diphosphate. In terms of biological role, catalyzes the ATP- as well as the pyrophosphate-dependent phosphorylation of a specific serine residue in HPr, a phosphocarrier protein of the phosphoenolpyruvate-dependent sugar phosphotransferase system (PTS). HprK/P also catalyzes the pyrophosphate-producing, inorganic phosphate-dependent dephosphorylation (phosphorolysis) of seryl-phosphorylated HPr (P-Ser-HPr). The sequence is that of HPr kinase/phosphorylase from Geobacter sulfurreducens (strain ATCC 51573 / DSM 12127 / PCA).